The primary structure comprises 461 residues: Anthocyanidin 3-O-glucoside 5-O-glucosyltransferase (461 aa).

An N-terminal signal peptide occupies residues 1–15 (MSRAHVLLATFPAQG). Histidine 16 acts as the Proton acceptor in catalysis. An anthocyanidin is bound at residue histidine 16. UDP-alpha-D-glucose is bound by residues glutamine 338, histidine 353, tryptophan 356, asparagine 357, serine 358, glutamate 361, aspartate 377, and glutamine 378.

It belongs to the UDP-glycosyltransferase family.

The catalysed reaction is an anthocyanidin 3-O-beta-D-glucoside + UDP-alpha-D-glucose = an anthocyanidin 3,5-di-O-beta-D-glucoside + UDP + 2 H(+). It functions in the pathway pigment biosynthesis; anthocyanin biosynthesis. Catalyzes the glucosylation at the O-5 position of anthocyanidin 3-glucosides to form anthocyanidin 3,5-di-O-glucosides using UDP-glucose as sugar donor. Anthocyanidin 3,5-di-O-glucosides are molecules that are responsible for pigmentation. Also acts on anthocyanidin 3-O-(6-O-malonylglucoside). Much less active with hydroxycinnamoylglucose derivatives. No activity in the absence of the 3-O-glucoside group. This chain is Anthocyanidin 3-O-glucoside 5-O-glucosyltransferase (HGT8), found in Verbena hybrida (Garden vervain).